The chain runs to 523 residues: DNA-directed RNA polymerase subunit Rpo2N (523 aa).

The segment at 501–523 (SSMGVEGIPGISMETTSTTSADD) is disordered. Residues 513–523 (METTSTTSADD) are compositionally biased toward polar residues.

It belongs to the RNA polymerase beta chain family. In terms of assembly, part of the RNA polymerase complex.

Its subcellular location is the cytoplasm. It carries out the reaction RNA(n) + a ribonucleoside 5'-triphosphate = RNA(n+1) + diphosphate. DNA-dependent RNA polymerase (RNAP) catalyzes the transcription of DNA into RNA using the four ribonucleoside triphosphates as substrates. The Rpo2 subunit (Rpo2N and Rpo2C in this organism) is implicated in DNA promoter recognition and in nucleotide binding. This Halobacterium salinarum (strain ATCC 29341 / DSM 671 / R1) protein is DNA-directed RNA polymerase subunit Rpo2N.